The sequence spans 320 residues: Cilia- and flagella-associated protein 77 (320 aa).

The tract at residues 1–27 (MPEARSSGPDLTRWRKQQQPVRRTVSQ) is disordered. The segment covering 17–27 (QQQPVRRTVSQ) has biased composition (polar residues).

Belongs to the CFAP77 family. In terms of assembly, microtubule inner protein component of sperm flagellar doublet microtubules. Expressed in airway epithelial cells.

It is found in the cytoplasm. Its subcellular location is the cytoskeleton. The protein resides in the cilium axoneme. The protein localises to the flagellum axoneme. Its function is as follows. Microtubule inner protein (MIP) part of the dynein-decorated doublet microtubules (DMTs) in cilia axoneme, which is required for motile cilia beating. The polypeptide is Cilia- and flagella-associated protein 77 (Homo sapiens (Human)).